We begin with the raw amino-acid sequence, 544 residues long: Pectinesterase 3 (544 aa).

Residues Asn174, Asn257, and Asn291 are each glycosylated (N-linked (GlcNAc...) asparagine). 2 residues coordinate substrate: Thr306 and Gln336. Asp359 (proton donor) is an active-site residue. The active-site Nucleophile is Asp380. 2 residues coordinate substrate: Arg448 and Trp450. N-linked (GlcNAc...) asparagine glycosylation is present at Asn532.

This sequence in the N-terminal section; belongs to the PMEI family. The protein in the C-terminal section; belongs to the pectinesterase family.

The protein localises to the secreted. It localises to the cell wall. The enzyme catalyses [(1-&gt;4)-alpha-D-galacturonosyl methyl ester](n) + n H2O = [(1-&gt;4)-alpha-D-galacturonosyl](n) + n methanol + n H(+). Its pathway is glycan metabolism; pectin degradation; 2-dehydro-3-deoxy-D-gluconate from pectin: step 1/5. Acts in the modification of cell walls via demethylesterification of cell wall pectin. This chain is Pectinesterase 3 (PME3), found in Solanum lycopersicum (Tomato).